The sequence spans 234 residues: MMAEEGNRNKSTSTIEKPERRLMFKQLTRRVGVAVVGSIFGSALLRSRPAPAATVLRPPGALAEKDFQSACVRCGLCVEDCPFDILKLASWADPAPMGTPFFTARDEPCRMCQDIPCVRACPTGALNPLLTDIRKADMGVAVLVDHETCLNYKGLNCSICVRVCPIRGEAISLKPIQNERGLLQIPTVDSTKCTGCGTCEKHCVLSEAAIRVLPRELGLGVSGANSAGRTPVWK.

4Fe-4S ferredoxin-type domains are found at residues 61–91 (ALAEKDFQSACVRCGLCVEDCPFDILKLASW), 98–131 (GTPFFTARDEPCRMCQDIPCVRACPTGALNPLLT), 140–176 (VAVLVDHETCLNYKGLNCSICVRVCPIRGEAISLKPI), and 184–215 (QIPTVDSTKCTGCGTCEKHCVLSEAAIRVLPR). [4Fe-4S] cluster contacts are provided by Cys-71, Cys-74, Cys-77, Cys-81, Cys-109, Cys-112, Cys-117, Cys-121, Cys-149, Cys-157, Cys-160, Cys-164, Cys-193, Cys-196, Cys-199, and Cys-203.

It functions in the pathway one-carbon metabolism; methylamine degradation. Its function is as follows. Involved in electron transfer. The sequence is that of Methylamine utilization ferredoxin-type protein MauM (mauM) from Methylobacillus flagellatus (strain ATCC 51484 / DSM 6875 / VKM B-1610 / KT).